The chain runs to 256 residues: uncharacterized protein (256 aa).

The signal sequence occupies residues 1–24 (MIKRVNKLVIGISLLFLVISITAG). Cys-25 is lipidated: N-palmitoyl cysteine. The S-diacylglycerol cysteine moiety is linked to residue Cys-25.

This sequence belongs to the staphylococcal tandem lipoprotein family.

Its subcellular location is the cell membrane. This is an uncharacterized protein from Staphylococcus aureus (strain bovine RF122 / ET3-1).